Reading from the N-terminus, the 152-residue chain is Deoxyuridine 5'-triphosphate nucleotidohydrolase (152 aa).

Residues 72–74, N85, and 89–91 each bind substrate; these read RSG and TID.

The protein belongs to the dUTPase family. Mg(2+) serves as cofactor.

The catalysed reaction is dUTP + H2O = dUMP + diphosphate + H(+). Its pathway is pyrimidine metabolism; dUMP biosynthesis; dUMP from dCTP (dUTP route): step 2/2. Its function is as follows. This enzyme is involved in nucleotide metabolism: it produces dUMP, the immediate precursor of thymidine nucleotides and it decreases the intracellular concentration of dUTP so that uracil cannot be incorporated into DNA. The chain is Deoxyuridine 5'-triphosphate nucleotidohydrolase from Rhodopseudomonas palustris (strain BisB18).